Here is a 399-residue protein sequence, read N- to C-terminus: Elongation factor Tu (399 aa).

The tr-type G domain occupies 10–209; the sequence is KPHVNIGTIG…EVDRYIPTPE (200 aa). The segment at 19–26 is G1; it reads GHVDHGKT. A GTP-binding site is contributed by 19 to 26; it reads GHVDHGKT. Threonine 26 contributes to the Mg(2+) binding site. Residues 60–64 are G2; that stretch reads GITIA. The segment at 81 to 84 is G3; it reads DCPG. GTP contacts are provided by residues 81–85 and 136–139; these read DCPGH and NKED. The interval 136-139 is G4; it reads NKED. The G5 stretch occupies residues 174 to 176; sequence SAL.

The protein belongs to the TRAFAC class translation factor GTPase superfamily. Classic translation factor GTPase family. EF-Tu/EF-1A subfamily. As to quaternary structure, monomer.

The protein localises to the cytoplasm. The catalysed reaction is GTP + H2O = GDP + phosphate + H(+). GTP hydrolase that promotes the GTP-dependent binding of aminoacyl-tRNA to the A-site of ribosomes during protein biosynthesis. The sequence is that of Elongation factor Tu from Wolinella succinogenes (strain ATCC 29543 / DSM 1740 / CCUG 13145 / JCM 31913 / LMG 7466 / NCTC 11488 / FDC 602W) (Vibrio succinogenes).